Here is a 171-residue protein sequence, read N- to C-terminus: uncharacterized protein (171 aa).

This is an uncharacterized protein from Mycoplasma genitalium (strain ATCC 33530 / DSM 19775 / NCTC 10195 / G37) (Mycoplasmoides genitalium).